Reading from the N-terminus, the 311-residue chain is Triacylglycerol lipase (311 aa).

Positions 1–26 are cleaved as a signal peptide; that stretch reads MKKKSLLPLGLAIGLASLAASPLIQA. In terms of domain architecture, AB hydrolase-1 spans 35 to 280; sequence PIVLAHGMLG…DNYRMNHLDE (246 aa). Position 42 (Met42) interacts with substrate. Catalysis depends on Ser108, which acts as the Nucleophile. His109 serves as a coordination point for substrate. A disulfide bridge links Cys209 with Cys261. Asp235 serves as a coordination point for Ca(2+). Residues Asp255 and His277 each act as charge relay system in the active site. Residues Asp279, Gln283, and Leu287 each contribute to the Ca(2+) site.

The protein belongs to the AB hydrolase superfamily. Pseudomonas lipase family. In terms of assembly, monomer. Requires Ca(2+) as cofactor.

It localises to the secreted. It carries out the reaction a triacylglycerol + H2O = a diacylglycerol + a fatty acid + H(+). With respect to regulation, na(+) increases lipase activity. Inhibited by diethyl p-nitrophenyl phosphate and 3,4-dichloroisocoumarin (DCI). In terms of biological role, catalyzes the hydrolysis of triacylglycerol. It also exhibits some esterase activity with p-nitrophenyl acetate and Tween 80 as substrates, however the lipase activity is approximately eight times the esterase activity. It shows a marked specificity for the 1,3-oleyl residues of triolein. The chain is Triacylglycerol lipase from Pseudomonas aeruginosa (strain ATCC 15692 / DSM 22644 / CIP 104116 / JCM 14847 / LMG 12228 / 1C / PRS 101 / PAO1).